A 218-amino-acid chain; its full sequence is MSFFDSYRKKMQMPSKEEVLPGRVQPIPTAAAHFVSGHPLKGPWPDGMKQVLFGMGCFWGAERLFWQVPGVYVTAVGYAGGITPNPTYEETCTGLTGHAEVVLVVYDPKVVTLNELLALFWEEHDPTQGMRQGNDIGTTYRSVIYTFNAVDRAVAEKSRDAYSQALASRGLGPVTTQITEAPDFYYAEDYHQQYLAKNPDGYCGLRGTGVSCPIPLAH.

C57 is a catalytic residue.

Belongs to the MsrA Met sulfoxide reductase family.

It carries out the reaction L-methionyl-[protein] + [thioredoxin]-disulfide + H2O = L-methionyl-(S)-S-oxide-[protein] + [thioredoxin]-dithiol. The catalysed reaction is [thioredoxin]-disulfide + L-methionine + H2O = L-methionine (S)-S-oxide + [thioredoxin]-dithiol. Its function is as follows. Has an important function as a repair enzyme for proteins that have been inactivated by oxidation. Catalyzes the reversible oxidation-reduction of methionine sulfoxide in proteins to methionine. The polypeptide is Peptide methionine sulfoxide reductase MsrA (Brucella melitensis biotype 2 (strain ATCC 23457)).